We begin with the raw amino-acid sequence, 326 residues long: tRNA-modifying protein YgfZ (326 aa).

The folate site is built by Trp-27 and Trp-189.

It belongs to the tRNA-modifying YgfZ family.

It is found in the cytoplasm. Its function is as follows. Folate-binding protein involved in regulating the level of ATP-DnaA and in the modification of some tRNAs. It is probably a key factor in regulatory networks that act via tRNA modification, such as initiation of chromosomal replication. This Escherichia coli O7:K1 (strain IAI39 / ExPEC) protein is tRNA-modifying protein YgfZ.